Consider the following 309-residue polypeptide: ATP synthase gamma chain (309 aa).

The protein belongs to the ATPase gamma chain family. As to quaternary structure, F-type ATPases have 2 components, CF(1) - the catalytic core - and CF(0) - the membrane proton channel. CF(1) has five subunits: alpha(3), beta(3), gamma(1), delta(1), epsilon(1). CF(0) has three main subunits: a, b and c.

The protein localises to the cell membrane. Functionally, produces ATP from ADP in the presence of a proton gradient across the membrane. The gamma chain is believed to be important in regulating ATPase activity and the flow of protons through the CF(0) complex. This is ATP synthase gamma chain from Mycobacterium sp. (strain JLS).